Here is a 126-residue protein sequence, read N- to C-terminus: Large ribosomal subunit protein bL17 (126 aa).

This sequence belongs to the bacterial ribosomal protein bL17 family. As to quaternary structure, part of the 50S ribosomal subunit. Contacts protein L32.

This is Large ribosomal subunit protein bL17 from Lactococcus lactis subsp. lactis (strain IL1403) (Streptococcus lactis).